Consider the following 441-residue polypeptide: Probable tRNA pseudouridine synthase D (441 aa).

D89 serves as the catalytic Nucleophile. A TRUD domain is found at 168 to 393; that stretch reads GVPNFFGVQR…SKGTRREVLL (226 aa).

The protein belongs to the pseudouridine synthase TruD family.

It carries out the reaction uridine(13) in tRNA = pseudouridine(13) in tRNA. Its function is as follows. Could be responsible for synthesis of pseudouridine from uracil-13 in transfer RNAs. This Methanosarcina acetivorans (strain ATCC 35395 / DSM 2834 / JCM 12185 / C2A) protein is Probable tRNA pseudouridine synthase D.